The primary structure comprises 168 residues: Disulfide bond formation protein B 2 (168 aa).

Residues 1–9 (MSLACLRSF) are Cytoplasmic-facing. A helical membrane pass occupies residues 10-26 (FLPALLASTAVLVASFH). Residues 27–44 (LESVVGLVPCALCFSQRL) lie on the Periplasmic side of the membrane. Residues C36 and C39 are joined by a disulfide bond. The chain crosses the membrane as a helical span at residues 45 to 61 (MLGVYALVCLAALVHSP). The Cytoplasmic segment spans residues 62–67 (AARGRR). The chain crosses the membrane as a helical span at residues 68 to 85 (AYAGLALASAFGGALLAG). Topologically, residues 86-140 (RHVWLQGDPQVVDGCHLPVEQVLQRPLGEILQMFLLGSPDCVSISWSFLDLTLPE) are periplasmic. A disulfide bond links C100 and C126. Residues 141-159 (WSLLAFLLLAAMPLSWLVA) traverse the membrane as a helical segment. The Cytoplasmic portion of the chain corresponds to 160 to 168 (YRFRKRAMA).

The protein belongs to the DsbB family.

Its subcellular location is the cell inner membrane. In terms of biological role, required for disulfide bond formation in some periplasmic proteins. Acts by oxidizing the DsbA protein. The protein is Disulfide bond formation protein B 2 of Pseudomonas entomophila (strain L48).